Here is a 281-residue protein sequence, read N- to C-terminus: 18S rRNA (guanine-N(7))-methyltransferase (281 aa).

The disordered stretch occupies residues 256-281; sequence KARRRRQGKEVCPDTQYTGRKRKPRF.

This sequence belongs to the class I-like SAM-binding methyltransferase superfamily. BUD23/WBSCR22 family. In terms of assembly, heterodimer with TRMT112; this heterodimerization is necessary for the metabolic stability and activity of the catalytic subunit BUD23. Interacts with GRIP1. May be ubiquitinated and targeted to degradation in response to pro-inflammatory cytokine signaling.

It is found in the nucleus. It localises to the nucleoplasm. The protein localises to the cytoplasm. Its subcellular location is the perinuclear region. It carries out the reaction a guanosine in 18S rRNA + S-adenosyl-L-methionine = an N(7)-methylguanosine in 18S rRNA + S-adenosyl-L-homocysteine. S-adenosyl-L-methionine-dependent methyltransferase that specifically methylates the N(7) position of a guanine in 18S rRNA. Requires the methyltransferase adapter protein TRM112 for full rRNA methyltransferase activity. Involved in the pre-rRNA processing steps leading to small-subunit rRNA production independently of its RNA-modifying catalytic activity. Important for biogenesis end export of the 40S ribosomal subunit independent on its methyltransferase activity. Locus-specific steroid receptor coactivator. Potentiates transactivation by glucocorticoid (NR3C1), mineralocorticoid (NR3C2), androgen (AR) and progesterone (PGR) receptors. Required for the maintenance of open chromatin at the TSC22D3/GILZ locus to facilitate NR3C1 loading on the response elements. Required for maintenance of dimethylation on histone H3 'Lys-79' (H3K79me2), although direct histone methyltransferase activity is not observed in vitro. This Bos taurus (Bovine) protein is 18S rRNA (guanine-N(7))-methyltransferase.